Consider the following 259-residue polypeptide: Glycerol-3-phosphate acyltransferase (259 aa).

7 consecutive transmembrane segments (helical) span residues 11–31 (IILASVVGYFLGSISWSIIIV), 62–82 (LVVAFLDALKVIFTSIIAILL), 93–112 (TSYFIPCIFALIGHCFPIYY), 124–144 (LGLLFVVNILYLIIFLIVWFI), 152–172 (VSVASIFSAFFVLIIMWIPYL), 188–208 (FSVAWKNYILFSLLNSFHYWF), and 211–231 (IWASGMLEGNIIVLIGGLILG).

The protein belongs to the PlsY family. As to quaternary structure, probably interacts with PlsX.

It localises to the cell membrane. It catalyses the reaction an acyl phosphate + sn-glycerol 3-phosphate = a 1-acyl-sn-glycero-3-phosphate + phosphate. Its pathway is lipid metabolism; phospholipid metabolism. Functionally, catalyzes the transfer of an acyl group from acyl-phosphate (acyl-PO(4)) to glycerol-3-phosphate (G3P) to form lysophosphatidic acid (LPA). This enzyme utilizes acyl-phosphate as fatty acyl donor, but not acyl-CoA or acyl-ACP. This chain is Glycerol-3-phosphate acyltransferase, found in Mycoplasma capricolum subsp. capricolum (strain California kid / ATCC 27343 / NCTC 10154).